A 141-amino-acid chain; its full sequence is Large ribosomal subunit protein mL42 (141 aa).

Residues 1-31 constitute a mitochondrion transit peptide; the sequence is MTAAVKWAVSHRTIWRHLFPIQNGAISSACH.

Belongs to the mitochondrion-specific ribosomal protein mL42 family. In terms of assembly, component of the mitochondrial ribosome large subunit (39S) which comprises a 16S rRNA and about 50 distinct proteins. Component of the mitochondrial ribosome small subunit (28S) which comprises a 12S rRNA and about 30 distinct proteins.

It localises to the mitochondrion. This chain is Large ribosomal subunit protein mL42 (Mrpl42), found in Rattus norvegicus (Rat).